The chain runs to 604 residues: Aspartate--tRNA(Asp/Asn) ligase (604 aa).

Residue E175 coordinates L-aspartate. Positions 199–202 are aspartate; it reads QQFK. L-aspartate contacts are provided by R221 and H456. 221-223 is an ATP binding site; that stretch reads RDE. ATP is bound at residue E496. R503 serves as a coordination point for L-aspartate. Position 548 to 551 (548 to 551) interacts with ATP; the sequence is GVDR.

This sequence belongs to the class-II aminoacyl-tRNA synthetase family. Type 1 subfamily. Homodimer.

It localises to the cytoplasm. It carries out the reaction tRNA(Asx) + L-aspartate + ATP = L-aspartyl-tRNA(Asx) + AMP + diphosphate. Its function is as follows. Aspartyl-tRNA synthetase with relaxed tRNA specificity since it is able to aspartylate not only its cognate tRNA(Asp) but also tRNA(Asn). Reaction proceeds in two steps: L-aspartate is first activated by ATP to form Asp-AMP and then transferred to the acceptor end of tRNA(Asp/Asn). In Methylorubrum populi (strain ATCC BAA-705 / NCIMB 13946 / BJ001) (Methylobacterium populi), this protein is Aspartate--tRNA(Asp/Asn) ligase.